Here is a 155-residue protein sequence, read N- to C-terminus: LGELKHLHYLHAALHESMRLYPPVQFDSKFAKHDDVLPDGTFVKRGSRVTYHPYAMGRMERIWGADSLEFKPERWIRDGEFKQERAYKYPVYQGGVRVCLGKEMSLVEMASVALCLIRRFDVSVVNHSQLRFAPGLTATVSGGVHATVRRRDLSQ.

A heme-binding site is contributed by cysteine 99.

It belongs to the cytochrome P450 family. Heme is required as a cofactor.

This Helianthus annuus (Common sunflower) protein is Cytochrome P450.